A 384-amino-acid polypeptide reads, in one-letter code: F-box only protein 5 (384 aa).

Residues 25–67 (EVKGHKVSPRKTGALSLRSPAATNVSTPLESRSKGPHNKENYQ) form a disordered region. Residues 45 to 54 (AATNVSTPLE) show a composition bias toward polar residues. Residues 55–67 (SRSKGPHNKENYQ) show a composition bias toward basic and acidic residues. Positions 187-234 (CKLMRKDMRHILARILGLLGDCDLISCTKVSRTWRKIICQDQLALQRW) constitute an F-box domain. The ZBR-type zinc finger occupies 311–359 (SLRRCSRCSSPARFDAVMQRAVCTRISCAFEFCTLCQSAFHDSTPCRNT). The Zn(2+) site is built by Cys315, Cys318, Cys333, Cys338, Cys343, Cys346, His351, and Cys356.

As to quaternary structure, part of a SCF (SKP1-cullin-F-box) protein ligase complex.

It localises to the nucleus. The protein resides in the cytoplasm. The protein operates within protein modification; protein ubiquitination. In terms of biological role, during embryonic development, regulates the integrity of the genome and therefore the cell cycle progression by preventing rereplication through an APC-Cdh1-dependent mechanism. The polypeptide is F-box only protein 5 (Danio rerio (Zebrafish)).